An 809-amino-acid chain; its full sequence is LPS-assembly protein LptD (809 aa).

Positions 1-22 (MRRALRLLPLPLSIAICLPAMA) are cleaved as a signal peptide.

This sequence belongs to the LptD family. As to quaternary structure, component of the lipopolysaccharide transport and assembly complex. Interacts with LptE and LptA.

The protein localises to the cell outer membrane. In terms of biological role, together with LptE, is involved in the assembly of lipopolysaccharide (LPS) at the surface of the outer membrane. The chain is LPS-assembly protein LptD from Xanthomonas euvesicatoria pv. vesicatoria (strain 85-10) (Xanthomonas campestris pv. vesicatoria).